The primary structure comprises 156 residues: Putative pre-16S rRNA nuclease (156 aa).

Belongs to the YqgF nuclease family.

Its subcellular location is the cytoplasm. Its function is as follows. Could be a nuclease involved in processing of the 5'-end of pre-16S rRNA. The protein is Putative pre-16S rRNA nuclease of Streptomyces avermitilis (strain ATCC 31267 / DSM 46492 / JCM 5070 / NBRC 14893 / NCIMB 12804 / NRRL 8165 / MA-4680).